The primary structure comprises 440 residues: NADH-quinone oxidoreductase subunit D (440 aa).

It belongs to the complex I 49 kDa subunit family. As to quaternary structure, NDH-1 is composed of 14 different subunits. Subunits NuoB, C, D, E, F, and G constitute the peripheral sector of the complex.

Its subcellular location is the cell membrane. The catalysed reaction is a quinone + NADH + 5 H(+)(in) = a quinol + NAD(+) + 4 H(+)(out). In terms of biological role, NDH-1 shuttles electrons from NADH, via FMN and iron-sulfur (Fe-S) centers, to quinones in the respiratory chain. The immediate electron acceptor for the enzyme in this species is believed to be a menaquinone. Couples the redox reaction to proton translocation (for every two electrons transferred, four hydrogen ions are translocated across the cytoplasmic membrane), and thus conserves the redox energy in a proton gradient. The protein is NADH-quinone oxidoreductase subunit D of Acidothermus cellulolyticus (strain ATCC 43068 / DSM 8971 / 11B).